The chain runs to 258 residues: Imidazole glycerol phosphate synthase subunit HisF (258 aa).

Catalysis depends on residues aspartate 11 and aspartate 130.

Belongs to the HisA/HisF family. As to quaternary structure, heterodimer of HisH and HisF.

It localises to the cytoplasm. The catalysed reaction is 5-[(5-phospho-1-deoxy-D-ribulos-1-ylimino)methylamino]-1-(5-phospho-beta-D-ribosyl)imidazole-4-carboxamide + L-glutamine = D-erythro-1-(imidazol-4-yl)glycerol 3-phosphate + 5-amino-1-(5-phospho-beta-D-ribosyl)imidazole-4-carboxamide + L-glutamate + H(+). It participates in amino-acid biosynthesis; L-histidine biosynthesis; L-histidine from 5-phospho-alpha-D-ribose 1-diphosphate: step 5/9. IGPS catalyzes the conversion of PRFAR and glutamine to IGP, AICAR and glutamate. The HisF subunit catalyzes the cyclization activity that produces IGP and AICAR from PRFAR using the ammonia provided by the HisH subunit. The polypeptide is Imidazole glycerol phosphate synthase subunit HisF (Bradyrhizobium sp. (strain ORS 278)).